The chain runs to 130 residues: Small ribosomal subunit protein uS8 (130 aa).

Belongs to the universal ribosomal protein uS8 family. In terms of assembly, part of the 30S ribosomal subunit. Contacts proteins S5 and S12.

In terms of biological role, one of the primary rRNA binding proteins, it binds directly to 16S rRNA central domain where it helps coordinate assembly of the platform of the 30S subunit. The polypeptide is Small ribosomal subunit protein uS8 (Neisseria meningitidis serogroup C (strain 053442)).